The chain runs to 280 residues: NLP effector protein Pc553546 (280 aa).

The N-terminal stretch at 1–19 (MNLVAALVLCFALLSSVRG) is a signal peptide. A Hepta-peptide GHRHDWE motif motif is present at residues 123 to 129 (AGRHDWA). N-linked (GlcNAc...) asparagine glycosylation is found at Asn-142 and Asn-209.

It belongs to the Necrosis inducing protein (NPP1) family.

It localises to the secreted. Secreted effector that contributes strongly to virulence during infection by P.capsici. This chain is NLP effector protein Pc553546, found in Phytophthora capsici.